The sequence spans 263 residues: HTH-type transcriptional repressor NanR (263 aa).

Residues 1–25 (MDVMNAFDSQAEDSPTSLGRSLRRR) form a disordered region. The region spanning 30–98 (KKLSEMVEEE…NGERARVSRP (69 aa)) is the HTH gntR-type domain. The segment at residues 58-77 (ERELMAFFNVGRPSVREALA) is a DNA-binding region (H-T-H motif).

The protein belongs to the NanR family.

Functionally, transcriptional repressor that controls expression of the genes required for the catabolism of sialic acids. The sequence is that of HTH-type transcriptional repressor NanR from Salmonella schwarzengrund (strain CVM19633).